A 25-amino-acid chain; its full sequence is Dermaseptin-5.1TR (25 aa).

At valine 25 the chain carries Valine amide.

As to expression, expressed by the skin glands.

It is found in the secreted. In terms of biological role, has antimicrobial activity. In Phyllomedusa trinitatis (Trinidad leaf frog), this protein is Dermaseptin-5.1TR.